A 59-amino-acid polypeptide reads, in one-letter code: MPKVESHHWRRRRILGNRLDGRGVVPPTTHHSGYQWYTTMAGSAKVLCTKNPWKRGGGG.

This is an uncharacterized protein from Chenopodium amaranticolor (Quinoa).